The chain runs to 209 residues: Ribosomal RNA large subunit methyltransferase E (209 aa).

Residues Gly-63, Trp-65, Asp-83, Asp-99, and Asp-124 each coordinate S-adenosyl-L-methionine. Lys-164 acts as the Proton acceptor in catalysis. The 19-residue stretch at 191–209 (EASRGRSREVYIVATGYKG) folds into the TRAM domain.

Belongs to the class I-like SAM-binding methyltransferase superfamily. RNA methyltransferase RlmE family.

The protein localises to the cytoplasm. The enzyme catalyses uridine(2552) in 23S rRNA + S-adenosyl-L-methionine = 2'-O-methyluridine(2552) in 23S rRNA + S-adenosyl-L-homocysteine + H(+). Functionally, specifically methylates the uridine in position 2552 of 23S rRNA at the 2'-O position of the ribose in the fully assembled 50S ribosomal subunit. This chain is Ribosomal RNA large subunit methyltransferase E, found in Haemophilus influenzae (strain ATCC 51907 / DSM 11121 / KW20 / Rd).